A 487-amino-acid polypeptide reads, in one-letter code: Glutamyl-tRNA(Gln) amidotransferase subunit A (487 aa).

Residues Lys-79 and Ser-154 each act as charge relay system in the active site. The active-site Acyl-ester intermediate is Ser-178.

Belongs to the amidase family. GatA subfamily. In terms of assembly, heterotrimer of A, B and C subunits.

The enzyme catalyses L-glutamyl-tRNA(Gln) + L-glutamine + ATP + H2O = L-glutaminyl-tRNA(Gln) + L-glutamate + ADP + phosphate + H(+). In terms of biological role, allows the formation of correctly charged Gln-tRNA(Gln) through the transamidation of misacylated Glu-tRNA(Gln) in organisms which lack glutaminyl-tRNA synthetase. The reaction takes place in the presence of glutamine and ATP through an activated gamma-phospho-Glu-tRNA(Gln). This chain is Glutamyl-tRNA(Gln) amidotransferase subunit A, found in Heliobacterium modesticaldum (strain ATCC 51547 / Ice1).